Here is a 272-residue protein sequence, read N- to C-terminus: 1,4-dihydroxy-2-naphthoyl-CoA synthase (272 aa).

Residues Arg33, 72-76, Tyr84, 116-120, Thr142, Ser148, Tyr245, and Lys260 each bind substrate; these read SGGDQ and YAIGG. 141-143 lines the hydrogencarbonate pocket; that stretch reads QTG.

The protein belongs to the enoyl-CoA hydratase/isomerase family. MenB subfamily. The cofactor is hydrogencarbonate.

It carries out the reaction 2-succinylbenzoyl-CoA + H(+) = 1,4-dihydroxy-2-naphthoyl-CoA + H2O. It functions in the pathway quinol/quinone metabolism; 1,4-dihydroxy-2-naphthoate biosynthesis; 1,4-dihydroxy-2-naphthoate from chorismate: step 6/7. Its pathway is quinol/quinone metabolism; menaquinone biosynthesis. Its function is as follows. Converts o-succinylbenzoyl-CoA (OSB-CoA) to 1,4-dihydroxy-2-naphthoyl-CoA (DHNA-CoA). This Staphylococcus epidermidis (strain ATCC 12228 / FDA PCI 1200) protein is 1,4-dihydroxy-2-naphthoyl-CoA synthase.